Consider the following 216-residue polypeptide: MRLILLGPPGAGKGTQAQRIVEKHGIPQLSTGDMLRAAVGVGTEVGKRAKAVMDAGKLVSDEIVIAIVSERIDQPDCANGFILDGFPRTLVQADATEAMLKAKGLDLSVVIEFRVDDQELVRRVDGRYTCAQCGTVYHDTDKVPVEEGVCDKCGSTHFKRRPDDNAETMIKRLEVYYKETSPLIGYYYAKGKLRSVDGMAEIDQVTTEVESILSKL.

Residue 10–15 participates in ATP binding; that stretch reads GAGKGT. The segment at 30–59 is NMP; sequence STGDMLRAAVGVGTEVGKRAKAVMDAGKLV. Residues threonine 31, arginine 36, 57–59, 85–88, and glutamine 92 contribute to the AMP site; these read KLV and GFPR. An LID region spans residues 126 to 163; the sequence is GRYTCAQCGTVYHDTDKVPVEEGVCDKCGSTHFKRRPD. An ATP-binding site is contributed by arginine 127. Residues cysteine 130 and cysteine 133 each coordinate Zn(2+). 136 to 137 contributes to the ATP binding site; that stretch reads VY. Positions 150 and 153 each coordinate Zn(2+). 2 residues coordinate AMP: arginine 160 and arginine 172. Residue alanine 200 participates in ATP binding.

This sequence belongs to the adenylate kinase family. As to quaternary structure, monomer.

The protein localises to the cytoplasm. It carries out the reaction AMP + ATP = 2 ADP. It functions in the pathway purine metabolism; AMP biosynthesis via salvage pathway; AMP from ADP: step 1/1. In terms of biological role, catalyzes the reversible transfer of the terminal phosphate group between ATP and AMP. Plays an important role in cellular energy homeostasis and in adenine nucleotide metabolism. The chain is Adenylate kinase from Rhizobium etli (strain CIAT 652).